Here is a 158-residue protein sequence, read N- to C-terminus: UPF0262 protein RSKD131_1985 (158 aa).

The protein belongs to the UPF0262 family.

In Cereibacter sphaeroides (strain KD131 / KCTC 12085) (Rhodobacter sphaeroides), this protein is UPF0262 protein RSKD131_1985.